The following is a 317-amino-acid chain: MKWIEVSIKTTSEAVEAVANILYDGGVAGVSIEDENDFSLLEQSNEAWDYVDEALLDRELEGALVKGYLPEAADLAYKLELIRQSVALLPKYGLNIGLGEVTTLEVNEEDWSHSWKKYYKPTHIGKNIVVKPTWEEYERKEGEMIIEMDPGMAFGTGTHETTMMCAQELEKIVGAKYTVFDIGCGSGILSIVAAKLGAEKVIAVDLDGTAIRVTQENVDANDVSDIVEVRHGNLMDVVTSRADVIVANIIADIIILLSKDVKNFLKKEGIFIASGIILDKVEVVKAQLIANNLEIVKVETMGEWAVIISKLKGGVDE.

Thr162, Gly183, Asp205, and Asn248 together coordinate S-adenosyl-L-methionine.

The protein belongs to the methyltransferase superfamily. PrmA family.

It localises to the cytoplasm. The catalysed reaction is L-lysyl-[protein] + 3 S-adenosyl-L-methionine = N(6),N(6),N(6)-trimethyl-L-lysyl-[protein] + 3 S-adenosyl-L-homocysteine + 3 H(+). Its function is as follows. Methylates ribosomal protein L11. The chain is Ribosomal protein L11 methyltransferase from Alkaliphilus metalliredigens (strain QYMF).